We begin with the raw amino-acid sequence, 398 residues long: Acetate kinase (398 aa).

Position 7 (Asn7) interacts with Mg(2+). An ATP-binding site is contributed by Lys14. Arg91 serves as a coordination point for substrate. Residue Asp148 is the Proton donor/acceptor of the active site. Residues 208–212 (HIGNG), 283–285 (DLR), and 331–335 (GVGEN) contribute to the ATP site. Mg(2+) is bound at residue Glu385.

The protein belongs to the acetokinase family. As to quaternary structure, homodimer. Mg(2+) serves as cofactor. Requires Mn(2+) as cofactor.

The protein resides in the cytoplasm. The enzyme catalyses acetate + ATP = acetyl phosphate + ADP. Its pathway is metabolic intermediate biosynthesis; acetyl-CoA biosynthesis; acetyl-CoA from acetate: step 1/2. Its function is as follows. Catalyzes the formation of acetyl phosphate from acetate and ATP. Can also catalyze the reverse reaction. This chain is Acetate kinase, found in Porphyromonas gingivalis (strain ATCC 33277 / DSM 20709 / CIP 103683 / JCM 12257 / NCTC 11834 / 2561).